Here is a 366-residue protein sequence, read N- to C-terminus: Hydroxyproline O-arabinosyltransferase 1 (366 aa).

Residues threonine 6 to isoleucine 26 form a helical; Signal-anchor membrane-spanning segment.

As to expression, ubiquitous.

It is found in the golgi apparatus. It localises to the cis-Golgi network membrane. The enzyme catalyses trans-4-hydroxy-L-prolyl-[protein] + UDP-beta-L-arabinofuranose = O-(beta-L-arabinofuranosyl)-trans-4-hydroxy-L-prolyl-[protein] + UDP + H(+). Its function is as follows. Glycosyltransferase involved in the O-arabinosylation of several proteins including extensins and small signaling peptides. Catalyzes the transfer of the initial L-arabinose to the hydroxyl group of Hyp residues. Contributes redundantly with HPAT2 and HPAT3 to arabinosylation of EXT3. This is Hydroxyproline O-arabinosyltransferase 1 from Arabidopsis thaliana (Mouse-ear cress).